The following is a 349-amino-acid chain: Fructose-1,6-bisphosphatase class 1 (349 aa).

Positions 91, 110, 112, and 113 each coordinate Mg(2+). Substrate contacts are provided by residues 113–116 (DGSS) and N205. E277 serves as a coordination point for Mg(2+).

This sequence belongs to the FBPase class 1 family. Homotetramer. The cofactor is Mg(2+).

It is found in the cytoplasm. It catalyses the reaction beta-D-fructose 1,6-bisphosphate + H2O = beta-D-fructose 6-phosphate + phosphate. Its pathway is carbohydrate biosynthesis; gluconeogenesis. In Sinorhizobium medicae (strain WSM419) (Ensifer medicae), this protein is Fructose-1,6-bisphosphatase class 1.